Here is a 289-residue protein sequence, read N- to C-terminus: Toxin tox21A (289 aa).

The first 14 residues, 1–14 (MNLYFLFFISTILA), serve as a signal peptide directing secretion. Residues 15-27 (AKPFNSFNKTSLI) constitute a propeptide that is removed on maturation. The interval 270–289 (DKDITVHENAGDPKSDSRRC) is disordered.

Post-translationally, contains several disulfide bonds. As to expression, posterior glands which appear to be connected with the stylet through a series of ducts.

It localises to the secreted. Its function is as follows. Has contracting-paralyzing activity in insect larvae. The chain is Toxin tox21A from Pyemotes tritici (Straw itch mite).